The sequence spans 162 residues: Phosphopantetheine adenylyltransferase (162 aa).

Position 11 (Ser11) interacts with substrate. ATP is bound by residues 11-12 (SF) and His19. 3 residues coordinate substrate: Lys43, Thr75, and Arg89. ATP is bound by residues 90–92 (GLR), Glu100, and 125–131 (YAFLSSS).

Belongs to the bacterial CoaD family. Homohexamer. It depends on Mg(2+) as a cofactor.

It is found in the cytoplasm. The enzyme catalyses (R)-4'-phosphopantetheine + ATP + H(+) = 3'-dephospho-CoA + diphosphate. It participates in cofactor biosynthesis; coenzyme A biosynthesis; CoA from (R)-pantothenate: step 4/5. Its function is as follows. Reversibly transfers an adenylyl group from ATP to 4'-phosphopantetheine, yielding dephospho-CoA (dPCoA) and pyrophosphate. This is Phosphopantetheine adenylyltransferase from Finegoldia magna (strain ATCC 29328 / DSM 20472 / WAL 2508) (Peptostreptococcus magnus).